Consider the following 245-residue polypeptide: Probable transcriptional regulatory protein MAG6590 (245 aa).

It belongs to the TACO1 family.

Its subcellular location is the cytoplasm. The sequence is that of Probable transcriptional regulatory protein MAG6590 from Mycoplasmopsis agalactiae (strain NCTC 10123 / CIP 59.7 / PG2) (Mycoplasma agalactiae).